Consider the following 60-residue polypeptide: Large ribosomal subunit protein bL32 (60 aa).

Belongs to the bacterial ribosomal protein bL32 family.

This chain is Large ribosomal subunit protein bL32, found in Persephonella marina (strain DSM 14350 / EX-H1).